The sequence spans 685 residues: Bifunctional lycopene cyclase/phytoene synthase (685 aa).

The tract at residues 15–255 is lycopene beta-cyclase; it reads TLSYRHFHLL…LVSACFTFDR (241 aa). The next 7 helical transmembrane spans lie at 21–41, 48–68, 92–114, 129–149, 156–176, 187–207, and 231–251; these read FHLLWTLPLCAVLFLVARPFL, KLILLPIIAFVWTTPWDNLIV, YFFFVIQSLISTLWCTLLTRWAL, LATPAVVVCMLCFVLGLKAAV, YFGMITWWSSLPLALLLWGSV, GLAPFALSVLAPTFYLWASDV, and LPIEEMLFFLVTNLILVSACF. Positions 262-685 are phytoene synthase; sequence QSVAENAPPL…RAVSAVYFGV (424 aa).

This sequence in the N-terminal section; belongs to the lycopene beta-cyclase family. The protein in the C-terminal section; belongs to the phytoene/squalene synthase family.

It is found in the membrane. It catalyses the reaction all-trans-lycopene = gamma-carotene. It carries out the reaction gamma-carotene = all-trans-beta-carotene. The enzyme catalyses 2 (2E,6E,10E)-geranylgeranyl diphosphate = 15-cis-phytoene + 2 diphosphate. The protein operates within carotenoid biosynthesis; beta-carotene biosynthesis. It functions in the pathway carotenoid biosynthesis; phytoene biosynthesis; all-trans-phytoene from geranylgeranyl diphosphate: step 1/1. Functionally, bifunctional enzyme that catalyzes the reactions from geranylgeranyl diphosphate to phytoene (phytoene synthase) and lycopene to beta-carotene via the intermediate gamma-carotene (lycopene cyclase). The chain is Bifunctional lycopene cyclase/phytoene synthase from Sporisorium reilianum (strain SRZ2) (Maize head smut fungus).